A 156-amino-acid chain; its full sequence is UPF0266 membrane protein YobD (156 aa).

Residues 1–5 (MTITD) lie on the Periplasmic side of the membrane. Residues 6-26 (LVLILFIAALLAYALYDQFIM) form a helical membrane-spanning segment. Residues 27 to 44 (PRRNGPTLLSIALLRRGR) are Cytoplasmic-facing. Residues 45–65 (VDSVIFVGLVAILIYNNVTSH) form a helical membrane-spanning segment. Residue Gly66 is a topological domain, periplasmic. Residues 67–87 (AQMTTWLLSALALMGFYIFWI) form a helical membrane-spanning segment. The Cytoplasmic portion of the chain corresponds to 88-156 (RTPRIIFKQR…LLIENQYLKI (69 aa)).

The protein belongs to the UPF0266 family.

It localises to the cell inner membrane. The polypeptide is UPF0266 membrane protein YobD (yobD) (Salmonella typhimurium (strain LT2 / SGSC1412 / ATCC 700720)).